Here is a 527-residue protein sequence, read N- to C-terminus: NADH-ubiquinone oxidoreductase chain 5 (527 aa).

Transmembrane regions (helical) follow at residues 3 to 23 (ISIF…WLMP), 43 to 63 (FYFN…SVLV), 75 to 95 (FNYY…LNFS), 98 to 118 (IFTM…LVLF), 141 to 161 (FMFV…SFSM), 168 to 188 (LLLL…SWLP), 197 to 217 (VSSL…LMNF), 226 to 246 (FISF…LASL), 263 to 283 (MGFS…IHLV), 318 to 338 (LPNF…GLIF), 357 to 377 (YMMF…GYSF), 398 to 418 (VFMN…LWWM), 432 to 452 (VDFF…FLIL), and 507 to 527 (YLKS…FMIC).

It belongs to the complex I subunit 5 family.

The protein resides in the mitochondrion inner membrane. It carries out the reaction a ubiquinone + NADH + 5 H(+)(in) = a ubiquinol + NAD(+) + 4 H(+)(out). Functionally, core subunit of the mitochondrial membrane respiratory chain NADH dehydrogenase (Complex I) that is believed to belong to the minimal assembly required for catalysis. Complex I functions in the transfer of electrons from NADH to the respiratory chain. The immediate electron acceptor for the enzyme is believed to be ubiquinone. In Caenorhabditis elegans, this protein is NADH-ubiquinone oxidoreductase chain 5.